The chain runs to 507 residues: Dolichyl pyrophosphate Man9GlcNAc2 alpha-1,3-glucosyltransferase (507 aa).

Residues 1–3 (MEK) lie on the Cytoplasmic side of the membrane. Residues 4–24 (WYLMTVVVLIGLTVRWTVSLN) traverse the membrane as a helical segment. The Lumenal segment spans residues 25-114 (SYSGAGKPPM…SQAHKLFMRT (90 aa)). N-linked (GlcNAc...) asparagine glycosylation occurs at Asn59. The chain crosses the membrane as a helical span at residues 115 to 135 (TVLIADLLIYIPAVVLYCCCL). Residues 136-143 (KEISTKKK) lie on the Cytoplasmic side of the membrane. Residues 144-164 (IANALCILLYPGLILIDYGHF) traverse the membrane as a helical segment. The Lumenal segment spans residues 165–172 (QYNSVSLG). The helical transmembrane segment at 173 to 193 (FALWGVLGISCDCDLLGSLAF) threads the bilayer. The Cytoplasmic segment spans residues 194–226 (CLAINYKQMELYHALPFFCFLLGKCFKKGLKGK). The helical transmembrane segment at 227-247 (GFVLLVKLACIVVASFVLCWL) threads the bilayer. Residues 248-297 (PFFTEREQTLQVLRRLFPVDRGLFEDKVANIWCSFNVFLKIKDILPRHIQ) are Lumenal-facing. The helical transmembrane segment at 298–318 (LIMSFCFTFLSLLPACIKLIL) threads the bilayer. At 319 to 323 (QPSSK) the chain is on the cytoplasmic side. Residues 324–344 (GFKFTLVSCALSFFLFSFQVH) form a helical membrane-spanning segment. The Lumenal segment spans residues 345–361 (EKSILLVSLPVCLVLSE). Residues 362–382 (IPFMSTWFLLVSTFSMLPLLL) form a helical membrane-spanning segment. At 383–387 (KDELL) the chain is on the cytoplasmic side. The chain crosses the membrane as a helical span at residues 388–408 (MPSVVTTMAFFIACVTSFSIF). The Lumenal portion of the chain corresponds to 409-437 (EKTSEEELQLKSFSISVRKYLPCFTFLSR). Residues 438–458 (IIQYLFLISVITMVLLTLMTV) traverse the membrane as a helical segment. The Cytoplasmic portion of the chain corresponds to 459 to 473 (TLGPPQKLPDLFSVL). The chain crosses the membrane as a helical span at residues 474–494 (VCFVSCLNFLFFLVYFNIIIV). Over 495-507 (WDSKSGRNQKKIS) the chain is Lumenal.

This sequence belongs to the ALG6/ALG8 glucosyltransferase family.

Its subcellular location is the endoplasmic reticulum membrane. It carries out the reaction an alpha-D-Man-(1-&gt;2)-alpha-D-Man-(1-&gt;2)-alpha-D-Man-(1-&gt;3)-[alpha-D-Man-(1-&gt;2)-alpha-D-Man-(1-&gt;3)-[alpha-D-Man-(1-&gt;2)-alpha-D-Man-(1-&gt;6)]-alpha-D-Man-(1-&gt;6)]-beta-D-Man-(1-&gt;4)-beta-D-GlcNAc-(1-&gt;4)-alpha-D-GlcNAc-diphospho-di-trans,poly-cis-dolichol + a di-trans,poly-cis-dolichyl beta-D-glucosyl phosphate = an alpha-D-Glc-(1-&gt;3)-alpha-D-Man-(1-&gt;2)-alpha-D-Man-(1-&gt;2)-alpha-D-Man-(1-&gt;3)-[alpha-D-Man-(1-&gt;2)-alpha-D-Man-(1-&gt;3)-[alpha-D-Man-(1-&gt;2)-alpha-D-Man-(1-&gt;6)]-alpha-D-Man-(1-&gt;6)]-beta-D-Man-(1-&gt;4)-beta-D-GlcNAc-(1-&gt;4)-alpha-D-GlcNAc-diphospho-di-trans,poly-cis-dolichol + a di-trans,poly-cis-dolichyl phosphate + H(+). The protein operates within protein modification; protein glycosylation. In terms of biological role, dolichyl pyrophosphate Man9GlcNAc2 alpha-1,3-glucosyltransferase that operates in the biosynthetic pathway of dolichol-linked oligosaccharides, the glycan precursors employed in protein asparagine (N)-glycosylation. The assembly of dolichol-linked oligosaccharides begins on the cytosolic side of the endoplasmic reticulum membrane and finishes in its lumen. The sequential addition of sugars to dolichol pyrophosphate produces dolichol-linked oligosaccharides containing fourteen sugars, including two GlcNAcs, nine mannoses and three glucoses. Once assembled, the oligosaccharide is transferred from the lipid to nascent proteins by oligosaccharyltransferases. In the lumen of the endoplasmic reticulum, adds the first glucose residue from dolichyl phosphate glucose (Dol-P-Glc) onto the lipid-linked oligosaccharide intermediate Man(9)GlcNAc(2)-PP-Dol to produce Glc(1)Man(9)GlcNAc(2)-PP-Dol. Glc(1)Man(9)GlcNAc(2)-PP-Dol is a substrate for ALG8, the following enzyme in the biosynthetic pathway. In Pongo abelii (Sumatran orangutan), this protein is Dolichyl pyrophosphate Man9GlcNAc2 alpha-1,3-glucosyltransferase.